Here is a 478-residue protein sequence, read N- to C-terminus: CDK5 and ABL1 enzyme substrate 2 (478 aa).

Residues 1–121 (MAAAAAGGAP…GLGLDGQRQR (121 aa)) form a disordered region. The segment covering 11–24 (GPAPGPAGPPPPAA) has biased composition (pro residues). Over residues 25 to 35 (PTSAARAPPQA) the composition is skewed to low complexity. Residues 36 to 46 (LRRRGDSRRRQ) show a composition bias toward basic residues. The span at 69–92 (EKPPPPPAEAREPPAPPPPEPPTG) shows a compositional bias: pro residues. S130 and S208 each carry phosphoserine. Residues 257–296 (SDSHGLLPTPRPSVPRTLPGSRHKPAPTKSAPASTELGSD) form a disordered region.

Belongs to the cyclin family. Binds to CDK3, CDK5 and ABL1. The C-terminal cyclin-box-like region binds to CDK5.

In terms of biological role, unknown. Probably involved in G1-S cell cycle transition. The chain is CDK5 and ABL1 enzyme substrate 2 (CABLES2) from Homo sapiens (Human).